The primary structure comprises 758 residues: DNA ligase (758 aa).

Residues 1–28 form a disordered region; the sequence is MPENFGAMRQDGLVSTSESDSPAPAATP. Residues 60 to 64, 109 to 110, and Glu-148 contribute to the NAD(+) site; these read DAEFD and SL. The N6-AMP-lysine intermediate role is filled by Lys-150. Positions 171, 208, 324, and 348 each coordinate NAD(+). Zn(2+) is bound by residues Cys-442, Cys-445, Cys-461, and Cys-467. The 90-residue stretch at 660–749 folds into the BRCT domain; it reads SVRRTLAGLT…PDHSAEAEEN (90 aa). The segment at 735 to 758 is disordered; sequence LLAHGPDHSAEAEENESEGSTTND.

This sequence belongs to the NAD-dependent DNA ligase family. LigA subfamily. Requires Mg(2+) as cofactor. Mn(2+) serves as cofactor.

The catalysed reaction is NAD(+) + (deoxyribonucleotide)n-3'-hydroxyl + 5'-phospho-(deoxyribonucleotide)m = (deoxyribonucleotide)n+m + AMP + beta-nicotinamide D-nucleotide.. Functionally, DNA ligase that catalyzes the formation of phosphodiester linkages between 5'-phosphoryl and 3'-hydroxyl groups in double-stranded DNA using NAD as a coenzyme and as the energy source for the reaction. It is essential for DNA replication and repair of damaged DNA. The sequence is that of DNA ligase from Renibacterium salmoninarum (strain ATCC 33209 / DSM 20767 / JCM 11484 / NBRC 15589 / NCIMB 2235).